The primary structure comprises 347 residues: NADH-ubiquinone oxidoreductase chain 2 (347 aa).

A run of 10 helical transmembrane segments spans residues 1 to 21 (MNPL…TIVM), 25 to 45 (HWLV…PVLM), 59 to 79 (YFLT…INLI), 96 to 116 (IIMT…FWVP), 122 to 142 (IQLS…ISIL), 150 to 170 (NLNL…WGGL), 201 to 221 (ALLN…VFML), 242 to 262 (TALL…GFLP), 274 to 294 (NSVI…YFYM), and 326 to 346 (LSPL…LTLL).

The protein belongs to the complex I subunit 2 family. Core subunit of respiratory chain NADH dehydrogenase (Complex I) which is composed of 45 different subunits. Interacts with TMEM242.

It is found in the mitochondrion inner membrane. It catalyses the reaction a ubiquinone + NADH + 5 H(+)(in) = a ubiquinol + NAD(+) + 4 H(+)(out). Functionally, core subunit of the mitochondrial membrane respiratory chain NADH dehydrogenase (Complex I) which catalyzes electron transfer from NADH through the respiratory chain, using ubiquinone as an electron acceptor. Essential for the catalytic activity and assembly of complex I. The polypeptide is NADH-ubiquinone oxidoreductase chain 2 (Eidolon helvum (Straw-colored fruit bat)).